We begin with the raw amino-acid sequence, 271 residues long: Bifunctional protein FolD (271 aa).

NADP(+)-binding positions include glycine 154–serine 156, serine 181, and isoleucine 222.

Belongs to the tetrahydrofolate dehydrogenase/cyclohydrolase family. As to quaternary structure, homodimer.

The enzyme catalyses (6R)-5,10-methylene-5,6,7,8-tetrahydrofolate + NADP(+) = (6R)-5,10-methenyltetrahydrofolate + NADPH. The catalysed reaction is (6R)-5,10-methenyltetrahydrofolate + H2O = (6R)-10-formyltetrahydrofolate + H(+). Its pathway is one-carbon metabolism; tetrahydrofolate interconversion. Catalyzes the oxidation of 5,10-methylenetetrahydrofolate to 5,10-methenyltetrahydrofolate and then the hydrolysis of 5,10-methenyltetrahydrofolate to 10-formyltetrahydrofolate. In Thermotoga petrophila (strain ATCC BAA-488 / DSM 13995 / JCM 10881 / RKU-1), this protein is Bifunctional protein FolD.